The chain runs to 313 residues: Porphobilinogen deaminase (313 aa).

Cys-242 carries the post-translational modification S-(dipyrrolylmethanemethyl)cysteine.

This sequence belongs to the HMBS family. Monomer. Dipyrromethane is required as a cofactor.

The catalysed reaction is 4 porphobilinogen + H2O = hydroxymethylbilane + 4 NH4(+). It functions in the pathway porphyrin-containing compound metabolism; protoporphyrin-IX biosynthesis; coproporphyrinogen-III from 5-aminolevulinate: step 2/4. In terms of biological role, tetrapolymerization of the monopyrrole PBG into the hydroxymethylbilane pre-uroporphyrinogen in several discrete steps. The chain is Porphobilinogen deaminase from Escherichia coli (strain SE11).